A 92-amino-acid polypeptide reads, in one-letter code: MARSLKKGPFVDGHLMTKIEKLNETDKKQVVKTWSRRSTIFPQFIGHTIAVYDGRKHVPVFISEDMVGHKLGEFAPTRTYKGHASDDKKTRR.

This sequence belongs to the universal ribosomal protein uS19 family. As to quaternary structure, part of the 30S ribosomal subunit.

Protein S19 forms a complex with S13 that binds strongly to the 16S ribosomal RNA. This chain is Small ribosomal subunit protein uS19 (rpsS), found in Bacillus subtilis (strain 168).